The primary structure comprises 804 residues: Probable replication endonuclease from prophage-like region 2 (804 aa).

Active-site O-(5'-phospho-DNA)-tyrosine intermediate residues include tyrosine 503 and tyrosine 507.

This sequence belongs to the phage GPA family.

Functionally, possible endonuclease which induces a single-strand cut and initiates DNA replication. In Salmonella typhi, this protein is Probable replication endonuclease from prophage-like region 2.